Here is a 205-residue protein sequence, read N- to C-terminus: Holliday junction branch migration complex subunit RuvA (205 aa).

Residues 1 to 64 (MIGKLKGLID…EDQIKLFGFR (64 aa)) are domain I. The segment at 65–143 (SDVEREWFRL…AFADVDPGVI (79 aa)) is domain II. The segment at 144-154 (RLSGAIEDSRA) is flexible linker. Residues 154–205 (APQPIADAISALINLGYGQPQAAAAIAAASRAAGDKAETAQLIRLGLKELAK) are domain III.

Belongs to the RuvA family. As to quaternary structure, homotetramer. Forms an RuvA(8)-RuvB(12)-Holliday junction (HJ) complex. HJ DNA is sandwiched between 2 RuvA tetramers; dsDNA enters through RuvA and exits via RuvB. An RuvB hexamer assembles on each DNA strand where it exits the tetramer. Each RuvB hexamer is contacted by two RuvA subunits (via domain III) on 2 adjacent RuvB subunits; this complex drives branch migration. In the full resolvosome a probable DNA-RuvA(4)-RuvB(12)-RuvC(2) complex forms which resolves the HJ.

Its subcellular location is the cytoplasm. Functionally, the RuvA-RuvB-RuvC complex processes Holliday junction (HJ) DNA during genetic recombination and DNA repair, while the RuvA-RuvB complex plays an important role in the rescue of blocked DNA replication forks via replication fork reversal (RFR). RuvA specifically binds to HJ cruciform DNA, conferring on it an open structure. The RuvB hexamer acts as an ATP-dependent pump, pulling dsDNA into and through the RuvAB complex. HJ branch migration allows RuvC to scan DNA until it finds its consensus sequence, where it cleaves and resolves the cruciform DNA. This Bradyrhizobium sp. (strain BTAi1 / ATCC BAA-1182) protein is Holliday junction branch migration complex subunit RuvA.